A 105-amino-acid polypeptide reads, in one-letter code: Thioredoxin (105 aa).

A Thioredoxin domain is found at V2–A105. K3 carries the N6-acetyllysine modification. K8 carries the post-translational modification N6-succinyllysine. Active-site nucleophile residues include C32 and C35. A disulfide bond links C32 and C35. K39 is modified (N6-acetyllysine). S-nitrosocysteine occurs at positions 62 and 69. C73 bears the S-nitrosocysteine; alternate mark. K94 carries the post-translational modification N6-acetyllysine; alternate. Position 94 is an N6-succinyllysine; alternate (K94).

This sequence belongs to the thioredoxin family. In terms of assembly, homodimer; disulfide-linked. Interacts with TXNIP through the redox-active site. Interacts with MAP3K5 and CASP3. Interacts with APEX1; the interaction stimulates the FOS/JUN AP-1 DNA-binding activity in a redox-dependent manner. In terms of processing, in the fully reduced protein, both Cys-69 and Cys-73 are nitrosylated in response to nitric oxide (NO). When two disulfide bonds are present in the protein, only Cys-73 is nitrosylated. Cys-73 can serve as donor for nitrosylation of target proteins.

The protein localises to the nucleus. It is found in the cytoplasm. The protein resides in the secreted. Its function is as follows. Participates in various redox reactions through the reversible oxidation of its active center dithiol to a disulfide and catalyzes dithiol-disulfide exchange reactions. Plays a role in the reversible S-nitrosylation of cysteine residues in target proteins, and thereby contributes to the response to intracellular nitric oxide. Nitrosylates the active site Cys of CASP3 in response to nitric oxide (NO), and thereby inhibits caspase-3 activity. Induces the FOS/JUN AP-1 DNA binding activity in ionizing radiation (IR) cells through its oxidation/reduction status and stimulates AP-1 transcriptional activity. This chain is Thioredoxin (Txn), found in Rattus norvegicus (Rat).